Reading from the N-terminus, the 294-residue chain is UPF0761 membrane protein YPTB0027 (294 aa).

Helical transmembrane passes span 44 to 64, 67 to 87, 108 to 128, 136 to 156, 185 to 205, 212 to 232, and 246 to 266; these read LLSLVPLITVIFALFAAFPMF, ISIKLKAFIFANFMPATGDII, GLIVTALLLIYSVDSVLNIIW, LVFSFAVYWMVLTLGPILVGA, VFPLLISWVSFWLLYSVVPTV, ALIGALVAALLFELGKKGFAM, and VLAVIPILFLWVYWSWCIVLL.

Belongs to the UPF0761 family.

The protein localises to the cell inner membrane. The chain is UPF0761 membrane protein YPTB0027 from Yersinia pseudotuberculosis serotype I (strain IP32953).